The sequence spans 134 residues: Thionin-2.2 (134 aa).

Residues 1–24 form the signal peptide; sequence MEGKTVISSLLIMSLVLAQIQVEA. 3 cysteine pairs are disulfide-bonded: Cys27/Cys64, Cys28/Cys56, and Cys40/Cys50. Positions 71 to 134 are cleaved as a propeptide — acidic domain; sequence DILENSGDAV…GGSTAAVKSA (64 aa).

Belongs to the plant thionin (TC 1.C.44) family. Low basal expression in seedlings. Also detected in rosette leaves.

It localises to the secreted. Thionins are small plant proteins which are toxic to animal cells. They seem to exert their toxic effect at the level of the cell membrane. Their precise function is not known. The protein is Thionin-2.2 (THI2.2) of Arabidopsis thaliana (Mouse-ear cress).